The sequence spans 59 residues: UPF0509 protein YciZ (59 aa).

The protein belongs to the UPF0509 family.

This is UPF0509 protein YciZ from Salmonella agona (strain SL483).